Here is a 512-residue protein sequence, read N- to C-terminus: Cobyric acid synthase (512 aa).

Positions 251 to 451 (ALDIAVIRLP…IHGLFDSHHF (201 aa)) constitute a GATase cobBQ-type domain. C332 acts as the Nucleophile in catalysis. Residue H443 is part of the active site.

This sequence belongs to the CobB/CobQ family. CobQ subfamily.

It participates in cofactor biosynthesis; adenosylcobalamin biosynthesis. Its function is as follows. Catalyzes amidations at positions B, D, E, and G on adenosylcobyrinic A,C-diamide. NH(2) groups are provided by glutamine, and one molecule of ATP is hydrogenolyzed for each amidation. In Yersinia enterocolitica serotype O:8 / biotype 1B (strain NCTC 13174 / 8081), this protein is Cobyric acid synthase.